Reading from the N-terminus, the 75-residue chain is RNA-binding protein KhpA (75 aa).

The 47-residue stretch at 29-75 (SIIIELKVAPEDMGKVIGKQGRIAQAIRTLVKAAALKEKKRVIVEII) folds into the KH domain.

It belongs to the KhpA RNA-binding protein family. As to quaternary structure, forms a complex with KhpB.

The protein localises to the cytoplasm. Its function is as follows. A probable RNA chaperone. Forms a complex with KhpB which binds to cellular RNA and controls its expression. Plays a role in peptidoglycan (PG) homeostasis and cell length regulation. The protein is RNA-binding protein KhpA of Caldanaerobacter subterraneus subsp. tengcongensis (strain DSM 15242 / JCM 11007 / NBRC 100824 / MB4) (Thermoanaerobacter tengcongensis).